A 390-amino-acid chain; its full sequence is S-adenosylmethionine synthase (390 aa).

Histidine 17 contacts ATP. Aspartate 19 lines the Mg(2+) pocket. Glutamate 45 is a binding site for K(+). Positions 58 and 101 each coordinate L-methionine. Residues 101–111 form a flexible loop region; it reads QSPDIGQGVDT. ATP contacts are provided by residues 160-162, 226-227, aspartate 235, 241-242, alanine 258, and lysine 262; these read DGK, RF, and RK. L-methionine is bound at residue aspartate 235. Lysine 266 provides a ligand contact to L-methionine.

Belongs to the AdoMet synthase family. In terms of assembly, homotetramer; dimer of dimers. Mg(2+) is required as a cofactor. The cofactor is K(+).

The protein resides in the cytoplasm. It carries out the reaction L-methionine + ATP + H2O = S-adenosyl-L-methionine + phosphate + diphosphate. It functions in the pathway amino-acid biosynthesis; S-adenosyl-L-methionine biosynthesis; S-adenosyl-L-methionine from L-methionine: step 1/1. Catalyzes the formation of S-adenosylmethionine (AdoMet) from methionine and ATP. The overall synthetic reaction is composed of two sequential steps, AdoMet formation and the subsequent tripolyphosphate hydrolysis which occurs prior to release of AdoMet from the enzyme. The polypeptide is S-adenosylmethionine synthase (Anaeromyxobacter dehalogenans (strain 2CP-1 / ATCC BAA-258)).